The sequence spans 105 residues: WRMIWEKRVEAIVMLTNVDENGRRKCEKYWPGDTERGSHGEFEVSCIDNTTLGQIIRRKFKISHQSYPNRTQVVVQYHYTAWPDHGVPQTTSELFNLRRIVRTEF.

A Tyrosine-protein phosphatase domain is found at 1-105 (WRMIWEKRVE…NLRRIVRTEF (105 aa)). Substrate is bound at residue D84.

The protein belongs to the protein-tyrosine phosphatase family.

The catalysed reaction is O-phospho-L-tyrosyl-[protein] + H2O = L-tyrosyl-[protein] + phosphate. In Styela plicata (Wrinkled sea squirt), this protein is Tyrosine-protein phosphatase 12 (STY-12).